A 423-amino-acid chain; its full sequence is Testin (423 aa).

2 disordered regions span residues 1-21 and 138-169; these read MSAT…ACAS and EKQP…PSKC. The region spanning 97-204 is the PET domain; the sequence is MILTNPVAAK…GDVKFPSEMN (108 aa). A compositionally biased stretch (basic and acidic residues) spans 160–169; the sequence is PAHDQDPSKC. 3 LIM zinc-binding domains span residues 236–299, 301–361, and 364–423; these read YSCY…CDSE, PRCA…NHAV, and QGCH…RMMS.

It belongs to the prickle / espinas / testin family. As to quaternary structure, interacts via LIM domain 1 with ZYX. Interacts (via LIM domain 3) with ENAH and VASP. Interacts with ALKBH4, talin, actin, alpha-actinin, GRIP1 and PXN. Interacts (via LIM domain 2) with ACTL7A (via N-terminus). Heterodimer with ACTL7A; the heterodimer interacts with ENAH to form a heterotrimer. In terms of tissue distribution, detected at the acrosome of round spermatids (at protein level). Isoform TES1 transcript is highly expressed in adult testis and detected at low levels in other tissues. Isoform TES2 transcript is highly expressed in testis, kidney and spleen; intermediate in thymus, submaxillary gland and lung; detected at low levels in other tissues.

It is found in the cytoplasm. The protein resides in the cell junction. Its subcellular location is the focal adhesion. Scaffold protein that may play a role in cell adhesion, cell spreading and in the reorganization of the actin cytoskeleton. Plays a role in the regulation of cell proliferation. May act as a tumor suppressor. The chain is Testin (Tes) from Mus musculus (Mouse).